The following is a 413-amino-acid chain: Enolase (413 aa).

Position 170 (Q170) interacts with (2R)-2-phosphoglycerate. The Proton donor role is filled by E212. Mg(2+)-binding residues include D245, E286, and D313. Residues K338, R367, S368, and K389 each coordinate (2R)-2-phosphoglycerate. The active-site Proton acceptor is K338.

This sequence belongs to the enolase family. Requires Mg(2+) as cofactor.

It is found in the cytoplasm. The protein resides in the secreted. The protein localises to the cell surface. The catalysed reaction is (2R)-2-phosphoglycerate = phosphoenolpyruvate + H2O. Its pathway is carbohydrate degradation; glycolysis; pyruvate from D-glyceraldehyde 3-phosphate: step 4/5. Its function is as follows. Catalyzes the reversible conversion of 2-phosphoglycerate (2-PG) into phosphoenolpyruvate (PEP). It is essential for the degradation of carbohydrates via glycolysis. The sequence is that of Enolase from Neorickettsia sennetsu (strain ATCC VR-367 / Miyayama) (Ehrlichia sennetsu).